Consider the following 316-residue polypeptide: Olfactory receptor 5AP2 (316 aa).

At 1 to 34 (MRLMKEVRGRNQTEVTEFLLLGLSDNPDLQGVLF) the chain is on the extracellular side. N11 is a glycosylation site (N-linked (GlcNAc...) asparagine). A helical membrane pass occupies residues 35-55 (ALFLLIYMANMVGNLGMIVLI). K56 is a topological domain (cytoplasmic). A helical transmembrane segment spans residues 57-77 (IDLCLHTPMYFFLSSLSFVDA). Residues 78 to 104 (SYSSSVTPKMLVNLMAENKAISFHGCA) are Extracellular-facing. Residues C103 and C195 are joined by a disulfide bond. Residues 105–125 (AQFYFFGSFLGTECFLLAMMA) form a helical membrane-spanning segment. The Cytoplasmic segment spans residues 126–135 (YDRYAAIWNP). The chain crosses the membrane as a helical span at residues 136-156 (LLYPVLVSGRICFLLIATSFL). The Extracellular portion of the chain corresponds to 157–210 (AGCGNAAIHTGMTFRLSFCGSNRINHFYCDTPPLLKLSCSDTHFNGIVIMAFSS). Residues 211 to 231 (FIVISCVMIVLISYLCIFIAV) traverse the membrane as a helical segment. Over 232–245 (LKMPSLEGRHKAFS) the chain is Cytoplasmic. The helical transmembrane segment at 246–266 (TCASYLMAVTIFFGTILFMYL) threads the bilayer. Residues 267–278 (RPTSSYSMEQDK) lie on the Extracellular side of the membrane. A helical transmembrane segment spans residues 279–299 (VVSVFYTVIIPVLNPLIYSLK). Residues 300–316 (NKDVKKALKKILWKHIL) are Cytoplasmic-facing.

It belongs to the G-protein coupled receptor 1 family.

It localises to the cell membrane. Its function is as follows. Odorant receptor. This Homo sapiens (Human) protein is Olfactory receptor 5AP2.